Reading from the N-terminus, the 467-residue chain is Polygalacturonase (467 aa).

An N-terminal signal peptide occupies residues 1–27 (MALQRRFFQFVIITLLIPSFILGYTSA). Catalysis depends on aspartate 283, which acts as the Proton donor. The N-linked (GlcNAc...) asparagine glycan is linked to asparagine 290. Histidine 306 is a catalytic residue.

The protein belongs to the glycosyl hydrolase 28 family.

It localises to the secreted. It is found in the cell wall. The catalysed reaction is (1,4-alpha-D-galacturonosyl)n+m + H2O = (1,4-alpha-D-galacturonosyl)n + (1,4-alpha-D-galacturonosyl)m.. Functionally, acts in concert with the pectinesterase, in the ripening process. Is involved in cell wall metabolism, specifically in polyuronide degradation. This Actinidia deliciosa (Kiwi) protein is Polygalacturonase.